Consider the following 673-residue polypeptide: Annexin A6 (673 aa).

Alanine 2 carries the N-acetylalanine modification. Serine 13 is modified (phosphoserine). 8 Annexin repeats span residues 20–91 (FNPS…GLMR), 92–163 (PPAY…VLLQ), 175–247 (DLVQ…AVVK), 251–322 (STAE…KLCG), 363–434 (FNPD…GLMM), 435–506 (PPAH…SLAT), 521–595 (EDAQ…AIVQ), and 599–670 (NKPL…AICG). Tyrosine 30 bears the Phosphotyrosine mark. N6-acetyllysine occurs at positions 63, 68, 75, and 81. Tyrosine 201 bears the Phosphotyrosine mark. N6-acetyllysine occurs at positions 306, 370, and 418. Serine 422 carries the phosphoserine modification. Lysine 483 is modified (N6-acetyllysine). Serine 537 bears the Phosphoserine mark. Residue lysine 620 is modified to N6-acetyllysine.

The protein belongs to the annexin family. Phosphorylated in response to growth factor stimulation.

The protein resides in the cytoplasm. Its subcellular location is the melanosome. Functionally, may associate with CD21. May regulate the release of Ca(2+) from intracellular stores. This is Annexin A6 (ANXA6) from Bos taurus (Bovine).